A 453-amino-acid polypeptide reads, in one-letter code: Carbamoyl phosphate synthase arginine-specific small chain (453 aa).

The transit peptide at 1–13 (MFSKLAANFAQRA) directs the protein to the mitochondrion. Residues 233 to 420 (HVALIDCGVK…LENVRAAKSA (188 aa)) enclose the Glutamine amidotransferase type-1 domain. Cys309 functions as the Nucleophile in the catalytic mechanism. Residues His393 and Glu395 contribute to the active site.

The protein belongs to the CarA family. Heterodimer composed of 2 chains; the small (or glutamine) chain promotes the hydrolysis of glutamine to ammonia, which is used by the large (or ammonia) chain to synthesize carbamoyl phosphate.

It localises to the mitochondrion matrix. The enzyme catalyses hydrogencarbonate + L-glutamine + 2 ATP + H2O = carbamoyl phosphate + L-glutamate + 2 ADP + phosphate + 2 H(+). It catalyses the reaction L-glutamine + H2O = L-glutamate + NH4(+). It functions in the pathway amino-acid biosynthesis; L-arginine biosynthesis; carbamoyl phosphate from bicarbonate: step 1/1. Its function is as follows. Small subunit of the arginine-specific carbamoyl phosphate synthase (CPSase). CPSase catalyzes the formation of carbamoyl phosphate from the ammonia moiety of glutamine, carbonate, and phosphate donated by ATP, the first step of the arginine biosynthetic pathway. The small subunit (glutamine amidotransferase) binds and cleaves glutamine to supply the large subunit with the substrate ammonia. The chain is Carbamoyl phosphate synthase arginine-specific small chain (cpa1) from Hypocrea virens (Gliocladium virens).